Consider the following 458-residue polypeptide: Type III intermediate filament (458 aa).

The segment at 1-100 (MEKGYKMNRS…KVNRTNEKAE (100 aa)) is head. Residues 97–405 (EKAEMIELND…KLLEGEENRI (309 aa)) form the IF rod domain. Positions 406 to 458 (SMPLPSFGSMSLSDAMFEQQPFENRTSKKKIVIKTVETSGGDVISETTQKIED) are tail.

The protein belongs to the intermediate filament family.

This Tetronarce californica (Pacific electric ray) protein is Type III intermediate filament.